Reading from the N-terminus, the 144-residue chain is Large ribosomal subunit protein uL13 (144 aa).

Belongs to the universal ribosomal protein uL13 family. As to quaternary structure, part of the 50S ribosomal subunit.

In terms of biological role, this protein is one of the early assembly proteins of the 50S ribosomal subunit, although it is not seen to bind rRNA by itself. It is important during the early stages of 50S assembly. This chain is Large ribosomal subunit protein uL13, found in Mycoplasmopsis synoviae (strain 53) (Mycoplasma synoviae).